Here is a 534-residue protein sequence, read N- to C-terminus: Cytochrome P450 monooxygenase vrtK (534 aa).

Position 448 (cysteine 448) interacts with heme.

This sequence belongs to the cytochrome P450 family. Requires heme as cofactor.

Its pathway is secondary metabolite biosynthesis; terpenoid biosynthesis. Its function is as follows. Cytochrome P450 monooxygenase; part of the gene cluster that mediates the biosynthesis of viridicatumtoxin, a tetracycline-like fungal meroterpenoid with a unique, fused spirobicyclic ring system. The first step of the pathway is the production of the malonamoyl-CoA starter unit for the polyketide synthase vrtA. The aldolase vrtJ may be involved in the synthesis of the malonamate substrate for malonamoyl-CoA synthetase vrtB. The polyketide synthase vrtA then may utilize the malonamoyl-CoA starter unit, followed by sequential condensation of eight malonyl-CoA units to form the polyketide backbone. The cyclization of the last ring could be mediated by the lactamase-like protein vrtG. The proposed post-PKS tailoring steps are a hydroxylation at C5 catalyzed the cytochrome P450 monooxygenase vrtE, a hydroxylation at C12a catalyzed by VrtH and/or VrtI, and an O-methylation by the O-methyltransferase vrtF. VrtC is then proposed to catalyze the transfer of a geranyl group synthesized by vrtD to the aromatic C ring of the tetracyclic polyketide intermediate of viridicatumtoxin to yield previridicatumtoxin. Finally, the cytochrome P450 monooxygenase vrtK catalyzes the spirocyclization of the geranyl moiety of previridicatumtoxin to afford viridicatumtoxin. This is Cytochrome P450 monooxygenase vrtK from Penicillium aethiopicum.